The chain runs to 418 residues: Tyrosine--tRNA ligase 1 (418 aa).

L-tyrosine is bound at residue Y34. The 'HIGH' region motif lies at 39 to 48 (PTGDSMHIGH). L-tyrosine contacts are provided by Y166 and Q170. The 'KMSKS' region motif lies at 228–232 (KFGKT). K231 serves as a coordination point for ATP. Positions 350–416 (KNIVDWLVDT…GKKNYFLAKV (67 aa)) constitute an S4 RNA-binding domain.

It belongs to the class-I aminoacyl-tRNA synthetase family. TyrS type 1 subfamily. In terms of assembly, homodimer.

The protein localises to the cytoplasm. It carries out the reaction tRNA(Tyr) + L-tyrosine + ATP = L-tyrosyl-tRNA(Tyr) + AMP + diphosphate + H(+). In terms of biological role, catalyzes the attachment of tyrosine to tRNA(Tyr) in a two-step reaction: tyrosine is first activated by ATP to form Tyr-AMP and then transferred to the acceptor end of tRNA(Tyr). The chain is Tyrosine--tRNA ligase 1 from Enterococcus faecalis (strain ATCC 700802 / V583).